The following is a 526-amino-acid chain: Peptide chain release factor 3 (526 aa).

The tr-type G domain occupies 8-277; the sequence is NKRRTFAIIS…GLTEWAPKPQ (270 aa). GTP contacts are provided by residues 17-24, 85-89, and 139-142; these read SHPDAGKT, DTPGH, and NKLD.

It belongs to the TRAFAC class translation factor GTPase superfamily. Classic translation factor GTPase family. PrfC subfamily.

The protein localises to the cytoplasm. Its function is as follows. Increases the formation of ribosomal termination complexes and stimulates activities of RF-1 and RF-2. It binds guanine nucleotides and has strong preference for UGA stop codons. It may interact directly with the ribosome. The stimulation of RF-1 and RF-2 is significantly reduced by GTP and GDP, but not by GMP. This Actinobacillus pleuropneumoniae serotype 5b (strain L20) protein is Peptide chain release factor 3.